A 326-amino-acid chain; its full sequence is MFISISAGIVTFLLTLVGIPAFIQFYRKAQITGQQMHEDVKQHQAKAGTPTMGGLVFLITSVLVAFFFALFSSQFSNNVGMILFILVLYGLVGFLDDFLKVFRKINEGLNPKQKLALQLLGGVIFYLFYERGGDILSVFGYPVHLGFFYIFFALFWLVGFSNAVNLTDGVDGLASISVVISLFAYGVIAYVQGQMDILLVILAMIGGLLGFFIFNHKPAKVFMGDVGSLALGGMLAAISMALHQEWTLLIIGIVYVFETTSVMMQVSYFKLTGGKRIFRMTPVHHHFELGGLSGKGNPWSEWKVDFFFWGVGLLASLLTLAILYLM.

The next 9 membrane-spanning stretches (helical) occupy residues 3 to 23 (ISISAGIVTFLLTLVGIPAFI), 51 to 71 (TMGGLVFLITSVLVAFFFALF), 79 to 99 (VGMILFILVLYGLVGFLDDFL), 115 to 135 (LALQLLGGVIFYLFYERGGDI), 138 to 158 (VFGYPVHLGFFYIFFALFWLV), 169 to 189 (GVDGLASISVVISLFAYGVIA), 195 to 215 (MDILLVILAMIGGLLGFFIFN), 221 to 243 (VFMGDVGSLALGGMLAAISMALH), and 306 to 326 (FFFWGVGLLASLLTLAILYLM).

The protein belongs to the glycosyltransferase 4 family. MraY subfamily. The cofactor is Mg(2+).

The protein resides in the cell membrane. The catalysed reaction is UDP-N-acetyl-alpha-D-muramoyl-L-alanyl-gamma-D-glutamyl-L-lysyl-D-alanyl-D-alanine + di-trans,octa-cis-undecaprenyl phosphate = Mur2Ac(oyl-L-Ala-gamma-D-Glu-L-Lys-D-Ala-D-Ala)-di-trans,octa-cis-undecaprenyl diphosphate + UMP. It participates in cell wall biogenesis; peptidoglycan biosynthesis. Functionally, catalyzes the initial step of the lipid cycle reactions in the biosynthesis of the cell wall peptidoglycan: transfers peptidoglycan precursor phospho-MurNAc-pentapeptide from UDP-MurNAc-pentapeptide onto the lipid carrier undecaprenyl phosphate, yielding undecaprenyl-pyrophosphoryl-MurNAc-pentapeptide, known as lipid I. In Streptococcus pneumoniae serotype 2 (strain D39 / NCTC 7466), this protein is Phospho-N-acetylmuramoyl-pentapeptide-transferase.